Reading from the N-terminus, the 160-residue chain is UPF0479 membrane protein YLL066W-A (160 aa).

2 helical membrane passes run 39–59 and 136–156; these read IVFCLPFFPALFLVPVQKVLQ and VPMIWLDVFQVFFVFLVISQH.

This sequence belongs to the UPF0479 family.

It is found in the membrane. The sequence is that of UPF0479 membrane protein YLL066W-A from Saccharomyces cerevisiae (strain ATCC 204508 / S288c) (Baker's yeast).